Reading from the N-terminus, the 465-residue chain is Branched-chain amino acid permease BcaP (465 aa).

A run of 13 helical transmembrane segments spans residues Leu-35–Val-55, Ala-57–Leu-77, Leu-103–Val-123, Ser-133–Val-153, Leu-159–Ile-179, Ile-188–Val-208, Phe-216–Ile-236, Gly-258–Thr-278, Val-305–Leu-325, Pro-355–Leu-375, Lys-380–Leu-400, Cys-413–Leu-432, and Val-437–Tyr-456.

It belongs to the amino acid-polyamine-organocation (APC) superfamily.

The protein localises to the cell membrane. Its activity is regulated as follows. Isoleucine uptake is efficiently reduced in the presence of 100-fold excess valine, leucine, alanine, threonine, serine, cysteine, asparagine, and a nonproteinaceous amino acid 4-azaleucine. Its function is as follows. Branched-chain amino acid transport system which is involved in the uptake of isoleucine, valine and probably leucine. Can also transport threonine, and is active as a minor serine permease. May be an amino acid permease of rather broad specificity, because several amino acids, albeit at 100-fold excess, are able to prevent isoleucine uptake. Probably does not transport methionine. Together with BraB and BrnQ, plays an important role in the activation of CodY, a branched-chain amino acid-responsive transcriptional regulator that controls the expression of several dozen transcription units in B.subtilis. The protein is Branched-chain amino acid permease BcaP of Bacillus subtilis (strain 168).